A 177-amino-acid polypeptide reads, in one-letter code: Large ribosomal subunit protein uL6 (177 aa).

Belongs to the universal ribosomal protein uL6 family. Part of the 50S ribosomal subunit.

In terms of biological role, this protein binds to the 23S rRNA, and is important in its secondary structure. It is located near the subunit interface in the base of the L7/L12 stalk, and near the tRNA binding site of the peptidyltransferase center. The chain is Large ribosomal subunit protein uL6 from Rhodospirillum rubrum (strain ATCC 11170 / ATH 1.1.1 / DSM 467 / LMG 4362 / NCIMB 8255 / S1).